The primary structure comprises 372 residues: tRNA-specific 2-thiouridylase MnmA (372 aa).

Residues 11 to 18 (GMSGGVDS) and methionine 37 each bind ATP. The interaction with target base in tRNA stretch occupies residues 97–99 (NPD). Cysteine 102 functions as the Nucleophile in the catalytic mechanism. Cysteine 102 and cysteine 199 are disulfide-bonded. Glycine 126 contributes to the ATP binding site. The interval 149–151 (KDQ) is interaction with tRNA. Cysteine 199 functions as the Cysteine persulfide intermediate in the catalytic mechanism. An interaction with tRNA region spans residues 309–310 (RY).

It belongs to the MnmA/TRMU family.

The protein resides in the cytoplasm. It carries out the reaction S-sulfanyl-L-cysteinyl-[protein] + uridine(34) in tRNA + AH2 + ATP = 2-thiouridine(34) in tRNA + L-cysteinyl-[protein] + A + AMP + diphosphate + H(+). Its function is as follows. Catalyzes the 2-thiolation of uridine at the wobble position (U34) of tRNA, leading to the formation of s(2)U34. The polypeptide is tRNA-specific 2-thiouridylase MnmA (Staphylococcus aureus (strain Mu50 / ATCC 700699)).